The sequence spans 113 residues: Coat protein TP1 (113 aa).

It localises to the virion. The chain is Coat protein TP1 from Thermoproteus tenax virus 1 (strain KRA1) (TTV1).